Consider the following 493-residue polypeptide: tRNA-2-methylthio-N(6)-dimethylallyladenosine synthase (493 aa).

The span at 1–14 (MPMTGLLQTTLSTA) shows a compositional bias: polar residues. Residues 1–31 (MPMTGLLQTTLSTADQDRSGPAATTGDTPAR) are disordered. The MTTase N-terminal domain maps to 35–155 (KRLHVITWGC…LGGMVRRAMN (121 aa)). [4Fe-4S] cluster-binding residues include C44, C80, C118, C199, C203, and C206. A Radical SAM core domain is found at 185–417 (LAGGRTAFLT…QALLRTQQEA (233 aa)). The 63-residue stretch at 420-482 (TACIGKTVNV…TNSLSATLPD (63 aa)) folds into the TRAM domain.

It belongs to the methylthiotransferase family. MiaB subfamily. In terms of assembly, monomer. The cofactor is [4Fe-4S] cluster.

The protein resides in the cytoplasm. It catalyses the reaction N(6)-dimethylallyladenosine(37) in tRNA + (sulfur carrier)-SH + AH2 + 2 S-adenosyl-L-methionine = 2-methylsulfanyl-N(6)-dimethylallyladenosine(37) in tRNA + (sulfur carrier)-H + 5'-deoxyadenosine + L-methionine + A + S-adenosyl-L-homocysteine + 2 H(+). Catalyzes the methylthiolation of N6-(dimethylallyl)adenosine (i(6)A), leading to the formation of 2-methylthio-N6-(dimethylallyl)adenosine (ms(2)i(6)A) at position 37 in tRNAs that read codons beginning with uridine. The protein is tRNA-2-methylthio-N(6)-dimethylallyladenosine synthase of Granulibacter bethesdensis (strain ATCC BAA-1260 / CGDNIH1).